We begin with the raw amino-acid sequence, 128 residues long: Fluoride-specific ion channel FluC (128 aa).

The next 4 helical transmembrane spans lie at 5–25, 32–52, 70–90, and 106–126; these read ALVA…SMVI, TFPW…GLFA, FFMV…LQTL, and VGSV…ATII. Positions 77 and 80 each coordinate Na(+).

The protein belongs to the fluoride channel Fluc/FEX (TC 1.A.43) family.

It localises to the cell inner membrane. It carries out the reaction fluoride(in) = fluoride(out). Na(+) is not transported, but it plays an essential structural role and its presence is essential for fluoride channel function. Functionally, fluoride-specific ion channel. Important for reducing fluoride concentration in the cell, thus reducing its toxicity. In Paramagnetospirillum magneticum (strain ATCC 700264 / AMB-1) (Magnetospirillum magneticum), this protein is Fluoride-specific ion channel FluC.